The primary structure comprises 958 residues: Unconventional myosin-Ih (958 aa).

Positions 12-691 (GVQDFVLLDA…TLFATEDAFE (680 aa)) constitute a Myosin motor domain. ATP is bound at residue 105 to 112 (GESGAGKT). At Ser-365 the chain carries Phosphoserine. The actin-binding stretch occupies residues 568–590 (LSSLLEILISKEPSYIRCIKPNE). IQ domains lie at 694–716 (KHQL…EYMK) and 717–746 (KRQA…AVQI). Residues 773-955 (RKNYILNLRY…NGQLRVVSAG (183 aa)) form the TH1 domain.

The protein belongs to the TRAFAC class myosin-kinesin ATPase superfamily. Myosin family. As to expression, highly expressed in the central nervous system, including the forebrain, midbrain and lower medulla. In the lower medulla, it is broadly expressed throughout the reticular formation. It is expressed in the retrotrapezoid nucleus and the nucleus of the solitary tract, as well as motor neurons of the facial, vagal and ambiguus nuclei. Expressed in neonatal inner-ear organs.

Myosins are actin-based motor molecules with ATPase activity. Unconventional myosins serve in intracellular movements. Their highly divergent tails are presumed to bind to membranous compartments, which would be moved relative to actin filaments. The chain is Unconventional myosin-Ih (Myo1h) from Mus musculus (Mouse).